The sequence spans 27 residues: Conotoxin (27 aa).

Disulfide bonds link Cys2/Cys16, Cys6/Cys18, and Cys12/Cys23. Asn27 is modified (asparagine amide).

In terms of tissue distribution, expressed by the venom duct.

It is found in the secreted. Its function is as follows. Probable neurotoxin that inhibits ion channels. In Conus amadis (Amadis cone), this protein is Conotoxin.